The primary structure comprises 269 residues: Hydroxypyruvate/pyruvate aldolase (269 aa).

His-47 acts as the Proton acceptor in catalysis. Residues Glu-151 and Asp-177 each coordinate a divalent metal cation.

The protein belongs to the HpcH/HpaI aldolase family. A divalent metal cation serves as cofactor.

It catalyses the reaction D-glyceraldehyde + 3-hydroxypyruvate = 2-dehydro-D-gluconate. The enzyme catalyses D-glyceraldehyde + 3-hydroxypyruvate = (3R,4S,5R)-3,4,5,6-tetrahydroxy-2-oxohexanoate. The catalysed reaction is D-glyceraldehyde + 3-hydroxypyruvate = 2-dehydro-D-galactonate. It carries out the reaction D-glyceraldehyde + pyruvate = 2-dehydro-3-deoxy-L-galactonate. It catalyses the reaction 2-dehydro-3-deoxy-D-gluconate = D-glyceraldehyde + pyruvate. In terms of biological role, aldolase which can catalyze in vitro the aldolisation reaction between hydroxypyruvate (HPA) or pyruvate (PA) and D-glyceraldehyde (D-GA). The condensation of hydroxypyruvate and D-glyceraldehyde produces 2-dehydro-D-gluconate as the major product, (3R,4S,5R)-3,4,5,6-tetrahydroxy-2-oxohexanoate and 2-dehydro-D-galactonate. The condensation of pyruvate and D-glyceraldehyde produces 2-dehydro-3-deoxy-L-galactonate as the major product and 2-dehydro-3-deoxy-D-gluconate. This Cupriavidus necator (strain ATCC 17699 / DSM 428 / KCTC 22496 / NCIMB 10442 / H16 / Stanier 337) (Ralstonia eutropha) protein is Hydroxypyruvate/pyruvate aldolase.